The sequence spans 486 residues: N-succinylglutamate 5-semialdehyde dehydrogenase (486 aa).

Residue 220-225 (GSSRTG) participates in NAD(+) binding. Residues glutamate 243 and cysteine 277 contribute to the active site.

The protein belongs to the aldehyde dehydrogenase family. AstD subfamily.

The enzyme catalyses N-succinyl-L-glutamate 5-semialdehyde + NAD(+) + H2O = N-succinyl-L-glutamate + NADH + 2 H(+). The protein operates within amino-acid degradation; L-arginine degradation via AST pathway; L-glutamate and succinate from L-arginine: step 4/5. Its function is as follows. Catalyzes the NAD-dependent reduction of succinylglutamate semialdehyde into succinylglutamate. This chain is N-succinylglutamate 5-semialdehyde dehydrogenase, found in Shewanella halifaxensis (strain HAW-EB4).